We begin with the raw amino-acid sequence, 640 residues long: Probable inactive receptor kinase At3g08680 (640 aa).

An N-terminal signal peptide occupies residues 1–22 (MMKIIAAFLFLLVTTFVSRCLS). LRR repeat units follow at residues 93-115 (ALRI…ILSL), 117-138 (FIRS…VLSH), 139-162 (RLVN…QNLT), 163-185 (QLTD…PPRL), and 186-206 (KYLN…VKSF). A disordered region spans residues 222 to 249 (LTPCPENTTAPSPSPTTPTEGPGTTNIG). Positions 226-247 (PENTTAPSPSPTTPTEGPGTTN) are enriched in low complexity. The helical transmembrane segment at 260-280 (GAIVGIAVGGSVLLFIILAII) threads the bilayer. A disordered region spans residues 289–315 (DGGQDSTAVPKAKPGRSDNKAEEFGSG). Positions 341 to 614 (RASAEVLGKG…EEVVNMMEEI (274 aa)) constitute a Protein kinase domain. Phosphoserine is present on serine 343. 347 to 355 (LGKGSYGTT) is a binding site for ATP. Position 364 is a phosphothreonine (threonine 364). ATP is bound at residue lysine 369. 3 positions are modified to phosphothreonine: threonine 441, threonine 514, and threonine 564. The segment at 612–640 (EEIRPSGSGPGSGNRASSPEMIRSSDSPV) is disordered.

Belongs to the protein kinase superfamily. Tyr protein kinase family.

It is found in the membrane. The protein is Probable inactive receptor kinase At3g08680 of Arabidopsis thaliana (Mouse-ear cress).